The following is a 180-amino-acid chain: Symerythrin (180 aa).

A cross-link (3-(L-phenylalan-2'-yl)-L-valine (Phe-Val)) is located at residues 17–127; that stretch reads FQDAVSHNNT…RRALETALEV (111 aa). One can recognise a Ferritin-like diiron domain in the interval 21-180; it reads VSHNNTDANA…RALENLLEVA (160 aa). Fe(3+) contacts are provided by Glu-37, Glu-40, Glu-71, Glu-128, Glu-131, Glu-162, and His-165.

Monomer. Requires Fe(3+) as cofactor.

The protein resides in the plastid. Its subcellular location is the cyanelle. In terms of biological role, exhibits oxidase-like and peroxidase-like activities in vitro. The protein is Symerythrin of Cyanophora paradoxa.